The following is a 189-amino-acid chain: Receptor activity-modifying protein 2 (189 aa).

An N-terminal signal peptide occupies residues 1 to 44 (MAPLRVERAPGGSRLGVTRAQRPTALCLPPLLLLLLLLLGAVSA). At 45 to 157 (SPESLNQSLP…VQPTFSDPPE (113 aa)) the chain is on the extracellular side. The segment covering 49 to 61 (LNQSLPESQNQSH) has biased composition (polar residues). A disordered region spans residues 49–69 (LNQSLPESQNQSHPTEDSLVS). Residues Asn-50, Asn-58, Asn-99, and Asn-144 are each glycosylated (N-linked (GlcNAc...) asparagine). Disulfide bonds link Cys-83-Cys-113 and Cys-98-Cys-145. A helical transmembrane segment spans residues 158 to 179 (DVLLAMIIAPICLIPFLVTLVV). Over 180–189 (WRSKDSDAQA) the chain is Cytoplasmic.

Belongs to the RAMP family. Heterodimer of CALCRL and RAMP2; the interaction forms the receptor complex for adrenomedullin/ADM. Heterodimer of CALCR and RAMP2; interaction forms the AMYR2 receptor complex for calcitonin/CALC and amylin/IAPP. As to expression, ubiquitous. Expressed predominantly in embryonic brain, lung and gut and in adult heart, lung, skeletal muscle and brain.

The protein resides in the cell membrane. Functionally, accessory protein that interacts with and modulates the function of G-protein coupled receptors including calcitonin gene-related peptide type 1 receptor (CALCRL) and calcitonin receptor (CALCR). Required for the transport of CALCRL to the plasma membrane. Together with CALCRL, form a receptor complex for adrenomedullin/ADM. Together with CALCR, act as a receptor complex for calcitonin/CT/CALC. Together with CALCR, also act as a receptor complex for amylin/IAPP. This Mus musculus (Mouse) protein is Receptor activity-modifying protein 2.